The primary structure comprises 364 residues: Dihydroorotate dehydrogenase (quinone) (364 aa).

FMN contacts are provided by residues 61–65 and Thr-85; that span reads AGYDK. Residue Lys-65 participates in substrate binding. 110 to 114 provides a ligand contact to substrate; it reads NRLGF. Positions 139 and 170 each coordinate FMN. Residue Asn-170 coordinates substrate. Ser-173 (nucleophile) is an active-site residue. Asn-175 lines the substrate pocket. FMN-binding residues include Lys-215 and Ser-243. 244-245 lines the substrate pocket; the sequence is NT. FMN is bound by residues Gly-266, Gly-295, and 316–317; that span reads YT.

This sequence belongs to the dihydroorotate dehydrogenase family. Type 2 subfamily. Monomer. Requires FMN as cofactor.

It localises to the cell membrane. The catalysed reaction is (S)-dihydroorotate + a quinone = orotate + a quinol. Its pathway is pyrimidine metabolism; UMP biosynthesis via de novo pathway; orotate from (S)-dihydroorotate (quinone route): step 1/1. In terms of biological role, catalyzes the conversion of dihydroorotate to orotate with quinone as electron acceptor. This chain is Dihydroorotate dehydrogenase (quinone), found in Brucella canis (strain ATCC 23365 / NCTC 10854 / RM-666).